The following is a 376-amino-acid chain: MPLRPALHLRTGKLRQTPTHNEPDGWAGQPLSAAAAHRGVCPMSDVMTANRRSFLAEDGKETIVRTDDLVRDFDLGHRPEGGRLVLRAVDKVSLTIRRGETLGLVGESGSGKSTIGRMLVGLLPYTSGNIELFGQKIEPRAKAAAWKPLRRRVQFVFQDPHAALNPRMRVGTAIAEPLDVAGNLTRKERSARVDELMELVGLPTSFARRFPHEFSGGQRQRIVIARALALNPEILVCDEAVASLDVSMQAQIVNLLKDLQDQLGLSHLFIAHDLAVVRAVSHRVAVLYAGQIVETGPRTALYSDPLHPYSRALLDSVPRARRGAPRSIIAGEVPSLLNKPKGCAFCPRCPKAMDICRDVPPPLRVIGDREVACHLY.

A disordered region spans residues 1 to 25; it reads MPLRPALHLRTGKLRQTPTHNEPDG. Positions 64 to 314 constitute an ABC transporter domain; sequence VRTDDLVRDF…PLHPYSRALL (251 aa). 106 to 113 contacts ATP; it reads GESGSGKS.

Belongs to the ABC transporter superfamily. The complex is composed of two ATP-binding proteins (BMEII0205 and BMEII0206), two transmembrane proteins (BMEII0207/BMEII0208 and BMEII0209) and a solute-binding protein (BMEII0210).

It localises to the cell inner membrane. Probably part of an ABC transporter complex that could be involved in peptide import. Probably responsible for energy coupling to the transport system. This Brucella melitensis biotype 1 (strain ATCC 23456 / CCUG 17765 / NCTC 10094 / 16M) protein is Putative peptide import ATP-binding protein BMEII0205.